The primary structure comprises 246 residues: 4-hydroxy-tetrahydrodipicolinate reductase (246 aa).

9–14 (GNTGRM) provides a ligand contact to NAD(+). Arg36 contributes to the NADP(+) binding site. NAD(+)-binding positions include 78–80 (GTT) and 104–107 (SPNM). His137 functions as the Proton donor/acceptor in the catalytic mechanism. Residue His138 participates in (S)-2,3,4,5-tetrahydrodipicolinate binding. Catalysis depends on Lys141, which acts as the Proton donor. 147-148 (GT) is a binding site for (S)-2,3,4,5-tetrahydrodipicolinate.

It belongs to the DapB family.

The protein resides in the cytoplasm. The enzyme catalyses (S)-2,3,4,5-tetrahydrodipicolinate + NAD(+) + H2O = (2S,4S)-4-hydroxy-2,3,4,5-tetrahydrodipicolinate + NADH + H(+). The catalysed reaction is (S)-2,3,4,5-tetrahydrodipicolinate + NADP(+) + H2O = (2S,4S)-4-hydroxy-2,3,4,5-tetrahydrodipicolinate + NADPH + H(+). It participates in amino-acid biosynthesis; L-lysine biosynthesis via DAP pathway; (S)-tetrahydrodipicolinate from L-aspartate: step 4/4. Catalyzes the conversion of 4-hydroxy-tetrahydrodipicolinate (HTPA) to tetrahydrodipicolinate. This is 4-hydroxy-tetrahydrodipicolinate reductase from Chlamydia muridarum (strain MoPn / Nigg).